Here is a 319-residue protein sequence, read N- to C-terminus: Ferrochelatase (319 aa).

Fe cation is bound by residues His193 and Glu274.

Belongs to the ferrochelatase family.

The protein resides in the cytoplasm. The catalysed reaction is heme b + 2 H(+) = protoporphyrin IX + Fe(2+). Its pathway is porphyrin-containing compound metabolism; protoheme biosynthesis; protoheme from protoporphyrin-IX: step 1/1. Catalyzes the ferrous insertion into protoporphyrin IX. This is Ferrochelatase from Erwinia tasmaniensis (strain DSM 17950 / CFBP 7177 / CIP 109463 / NCPPB 4357 / Et1/99).